The sequence spans 257 residues: Regulator of G-protein signaling 7-binding protein (257 aa).

Disordered regions lie at residues 1–45 (MSSA…SAHK) and 172–191 (NAETPALEDSLSSPLDSQQQ). The span at 32–45 (DWERRGSGSESAHK) shows a compositional bias: basic and acidic residues. Residues 180-191 (DSLSSPLDSQQQ) show a composition bias toward low complexity. The Nuclear localization signal signature appears at 242–247 (RRRKRR). S-palmitoyl cysteine attachment occurs at residues C252 and C253.

Belongs to the RGS7BP/RGS9BP family. As to quaternary structure, interacts with 'R7' family proteins RGS6, RGS7, RGS9 and RGS11. Component of some R7-Gbeta5 complex composed of some R7 protein (RGS6, RGS7, RGS9 or RGS11), Gbeta5 (GNB5) and RGS7BP. Post-translationally, palmitoylated. Undergoes rapid palmitoylation turnover. De novo and turnover palmitoylation are both mediated by ZDHHC2. Palmitoylation regulates the cell membrane and nuclear shuttling and the regulation of GPCR signaling. Upon depalmitoylation, it is targeted from the plasma membrane into the nucleus. GPCR signaling inhibits depalmitoylation and promotes localization to the plasma membrane.

Its subcellular location is the nucleus. The protein localises to the cytoplasm. It is found in the cell membrane. Its function is as follows. Regulator of G protein-coupled receptor (GPCR) signaling. Regulatory subunit of the R7-Gbeta5 complexes that acts by controlling the subcellular location of the R7-Gbeta5 complexes. When palmitoylated, it targets the R7-Gbeta5 complexes to the plasma membrane, leading to inhibit G protein alpha subunits. When it is unpalmitoylated, the R7-Gbeta5 complexes undergo a nuclear/cytoplasmic shuttling. May also act by controlling the proteolytic stability of R7 proteins, probably by protecting them from degradation. This is Regulator of G-protein signaling 7-binding protein (Rgs7bp) from Rattus norvegicus (Rat).